A 668-amino-acid polypeptide reads, in one-letter code: Phosphoglycerate transport system sensor protein PgtB (668 aa).

2 helical membrane passes run 20–40 and 342–362; these read GAFLTGALLTLIVSMVSLYSW and LILVATLLALLLAWGLNHYFI. The region spanning 364 to 416 is the HAMP domain; the sequence is SRLVKRFTALNQAVVQIGLGRTDSTIPVYGRDELGRIARLLRHTLGQLNMQRR. The Histidine kinase domain occupies 454-663; sequence TLAHEINQPL…CVVLQFSVTD (210 aa). Residue H457 is modified to Phosphohistidine; by autocatalysis.

Its subcellular location is the cell inner membrane. The catalysed reaction is ATP + protein L-histidine = ADP + protein N-phospho-L-histidine.. Its function is as follows. Member of the two-component regulatory system PgtB/PgtA that regulates the inducible phosphoglycerate transport system. Activates PgtA by phosphorylation. In Salmonella typhimurium (strain LT2 / SGSC1412 / ATCC 700720), this protein is Phosphoglycerate transport system sensor protein PgtB (pgtB).